The sequence spans 480 residues: Glycerol-3-phosphate transporter (480 aa).

The Cytoplasmic portion of the chain corresponds to 1–36 (MFGPFKPAPHIAELPAEKIDSTYKRLRWQVFAGIFF). Residues 37 to 57 (GYAAYYFVRANFDLAQPGLIQ) form a helical membrane-spanning segment. Residues 58-64 (AGLYSKA) lie on the Periplasmic side of the membrane. Residues 65–85 (ELGVIGSAAGLAYGLSKFVMA) form a helical membrane-spanning segment. Residues 86–94 (GMSDRSNPR) lie on the Cytoplasmic side of the membrane. The helical transmembrane segment at 95–113 (VFLPFGLLLSGLCMTLMGL) threads the bilayer. The Periplasmic segment spans residues 114–121 (FPWATSGI). A helical membrane pass occupies residues 122 to 142 (AIMWVMIFLNGWFQGMGWPPC). The Cytoplasmic segment spans residues 143-161 (GRTMVHWWSKSERGTIVSI). A helical transmembrane segment spans residues 162-181 (WNTAHNIGGMVPGAMVLLAS). Over 182 to 201 (AIFFSTHGIEAQAKDVWQQS) the chain is Periplasmic. The chain crosses the membrane as a helical span at residues 202 to 219 (LYFPGIAAMIFAIPVYFV). Over 220–274 (MRDTPQSCGLPSIEKWRNDYPDDYNEKTYENDLTAKEIFVTYVLKNKLLWYIAIA) the chain is Cytoplasmic. The chain crosses the membrane as a helical span at residues 275 to 295 (NVFVYLIRYGVLKWSPVYLSE). The Periplasmic portion of the chain corresponds to 296 to 300 (VKHFN). The chain crosses the membrane as a helical span at residues 301–321 (IKGTAWAYTIYELAAVPGTLL). The Cytoplasmic segment spans residues 322 to 334 (CGWVSDKVFKGKR). Residues 335–354 (GLTGFIFMILTTAAVVAYWM) traverse the membrane as a helical segment. At 355–359 (NPATP) the chain is on the periplasmic side. Residues 360 to 396 (EAELANYSAWYENPYQLTDFVLMTLIGFLIYGPVMLI) form a helical membrane-spanning segment. The Cytoplasmic portion of the chain corresponds to 397 to 415 (GLHALELAPKKAAGTAAGF). A helical membrane pass occupies residues 416–437 (TGLFGYLGGTVSASAVIGWAAQ). At 438–442 (HYGWD) the chain is on the periplasmic side. Residues 443 to 463 (GGFYVMIGGGVLAVLLLLIVM) traverse the membrane as a helical segment. Residues 464 to 479 (VEEGKHKAKLGDTYGT) lie on the Cytoplasmic side of the membrane.

Belongs to the major facilitator superfamily. Organophosphate:Pi antiporter (OPA) (TC 2.A.1.4) family.

It localises to the cell inner membrane. Responsible for glycerol-3-phosphate uptake. The chain is Glycerol-3-phosphate transporter (glpT) from Haemophilus influenzae (strain ATCC 51907 / DSM 11121 / KW20 / Rd).